The chain runs to 410 residues: G-protein coupled receptor family C group 5 member B (410 aa).

A signal peptide spans 1–28 (MFLVLERKMRTHQVFPLPLLLVIASVAS). The Extracellular portion of the chain corresponds to 29–56 (ENASTSRGCGLDLLPQYVSLCDLDAIWG). A glycan (N-linked (GlcNAc...) asparagine) is linked at Asn30. A helical membrane pass occupies residues 57–77 (IVVEAVAGAGALITLLLMLIL). The Cytoplasmic portion of the chain corresponds to 78–94 (LVRLPFIKDKERKRPVC). Residues 95-115 (LHFLFLLGTLGLFGLTFAFII) form a helical membrane-spanning segment. The Extracellular portion of the chain corresponds to 116–126 (QMDETICSIRR). The chain crosses the membrane as a helical span at residues 127–147 (FLWGVLFALCFSCLLSQAWRV). The Cytoplasmic portion of the chain corresponds to 148–164 (RRLVRQGTSPASWQLVS). Residues 165 to 185 (LALCLMLVQVIIATEWLVLTV) form a helical membrane-spanning segment. Topologically, residues 186–199 (LRDTKPACAYEPMD) are extracellular. The chain crosses the membrane as a helical span at residues 200–220 (FVMALIYDMVLLAITLAQSLF). At 221 to 234 (TLCGKFKRWKVNGA) the chain is on the cytoplasmic side. The helical transmembrane segment at 235 to 255 (FILVTTFLSALIWVVWMTMYL) threads the bilayer. The Extracellular portion of the chain corresponds to 256–271 (FGNSLIKQGDAWSDPT). Residues 272 to 292 (LAITLAASGWVFVIFHAIPEI) traverse the membrane as a helical segment. At 293 to 410 (HYTLLPPLQE…PPSHTGRHHW (118 aa)) the chain is on the cytoplasmic side. Position 355 is a phosphoserine (Ser355). Residues 356–381 (LEQRSSSLGKKPSSLGNRPSAPFRSN) are disordered. Residues 360–371 (SSSLGKKPSSLG) show a composition bias toward low complexity.

This sequence belongs to the G-protein coupled receptor 3 family.

It is found in the cell membrane. It localises to the cytoplasmic vesicle membrane. G-protein coupled receptor involved in the regulation of cell volume. This is G-protein coupled receptor family C group 5 member B (Gprc5b) from Mus musculus (Mouse).